The following is a 57-amino-acid chain: Andropin (57 aa).

Residues 1-23 form the signal peptide; the sequence is MKYFVVLVVLALILAITVGPSDA.

The protein belongs to the andropin family. In terms of tissue distribution, ejaculatory duct of adult males.

The protein resides in the secreted. Male-specific peptide with moderate activity against Gram-positive bacteria. This is Andropin (Anp) from Drosophila mauritiana (Fruit fly).